The primary structure comprises 1238 residues: DNA-directed RNA polymerase subunit beta (1238 aa).

The protein belongs to the RNA polymerase beta chain family. The RNAP catalytic core consists of 2 alpha, 1 beta, 1 beta' and 1 omega subunit. When a sigma factor is associated with the core the holoenzyme is formed, which can initiate transcription.

The enzyme catalyses RNA(n) + a ribonucleoside 5'-triphosphate = RNA(n+1) + diphosphate. DNA-dependent RNA polymerase catalyzes the transcription of DNA into RNA using the four ribonucleoside triphosphates as substrates. This Clostridioides difficile (strain 630) (Peptoclostridium difficile) protein is DNA-directed RNA polymerase subunit beta.